The primary structure comprises 288 residues: Stomatin (288 aa).

Residues 1-22 (MAEKRHTRDSEAQRLPDSFKDS) form a disordered region. The Cytoplasmic segment spans residues 1 to 25 (MAEKRHTRDSEAQRLPDSFKDSPSK). Ser-10 is modified (phosphoserine; by PKA). Ser-18 is subject to Phosphoserine. The stretch at 26–54 (GLGPCGWILVAFSFLFTVITFPISIWMCI) is an intramembrane region. Cys-30 carries the S-palmitoyl cysteine lipid modification. Topologically, residues 55–288 (KIIKEYERAI…IIGAKHSHLG (234 aa)) are cytoplasmic. A lipid anchor (S-palmitoyl cysteine; partial) is attached at Cys-87. Phosphoserine occurs at positions 161 and 244. A required for homooligomerization region spans residues 265–273 (STIVFPLPI). A required for lipid raft association region spans residues 267–269 (IVF). An interaction with LANCL1 region spans residues 273-287 (IDMLQGIIGAKHSHL).

This sequence belongs to the band 7/mec-2 family. Homodimer and higher order homooligomer. The homodimer is banana-shaped. Interacts with ASIC1, ASIC2 and ASIC3. Interacts with LANCL1. Interacts with SLC2A1. Interacts with SLC4A1; this interaction positively regulates SLC4A1 activity. Identified in large complexes with SLC40A1, SLC14A1, SLC29A1 and AQP1. Interacts with STOML1; may redistribute STOM from the plasma membrane to late endosomes. As to expression, detected in erythrocytes (at protein level). Widely expressed.

It is found in the cell membrane. The protein localises to the cytoplasm. The protein resides in the cytoskeleton. Its subcellular location is the membrane raft. It localises to the melanosome. It is found in the cytoplasmic vesicle. Regulates ion channel activity and transmembrane ion transport. Regulates ASIC2 and ASIC3 channel activity. The sequence is that of Stomatin from Homo sapiens (Human).